Consider the following 380-residue polypeptide: Anhydro-N-acetylmuramic acid kinase (380 aa).

17 to 24 (GTSMDGAD) contributes to the ATP binding site.

This sequence belongs to the anhydro-N-acetylmuramic acid kinase family.

It catalyses the reaction 1,6-anhydro-N-acetyl-beta-muramate + ATP + H2O = N-acetyl-D-muramate 6-phosphate + ADP + H(+). Its pathway is amino-sugar metabolism; 1,6-anhydro-N-acetylmuramate degradation. It functions in the pathway cell wall biogenesis; peptidoglycan recycling. Functionally, catalyzes the specific phosphorylation of 1,6-anhydro-N-acetylmuramic acid (anhMurNAc) with the simultaneous cleavage of the 1,6-anhydro ring, generating MurNAc-6-P. Is required for the utilization of anhMurNAc either imported from the medium or derived from its own cell wall murein, and thus plays a role in cell wall recycling. The polypeptide is Anhydro-N-acetylmuramic acid kinase (Cupriavidus metallidurans (strain ATCC 43123 / DSM 2839 / NBRC 102507 / CH34) (Ralstonia metallidurans)).